A 379-amino-acid chain; its full sequence is MTASAVLDLVKDLIARPSVTPDDVDCQMLLAQRLERIGFQCETIARGGVTNLWARRGAGAPLTVFAGHTDVVPPGPRDKWDSDPFVPTERDGFLYGRGAADMKSSIAAFVVAAEEFVAAHPEHPGSIALLITSDEEGPAVDGTVIVCDELRQRGEQLDYCIVGEPTSTEALGDVCKNGRRGSLSGRLLVKGVQGHVAYPHLARNPVHQLAPALTELVAIEWDQGNEYFPPTTFQVSNLHAGTGATNVVPGEAVALFNFRFSTASTPDQLKARVHEVLDRHGLEYQLDWELGGEPFLTPRGSLTDALVSAIQAETGLQAELSTTGGTSDGRFIARICPQVIEFGPCNATIHKVNERIELSSLAPLKNIYRRTLENLLLAD.

His68 serves as a coordination point for Zn(2+). Residue Asp70 is part of the active site. Asp101 is a Zn(2+) binding site. The active-site Proton acceptor is Glu135. Zn(2+) contacts are provided by Glu136, Glu164, and His350.

Belongs to the peptidase M20A family. DapE subfamily. Homodimer. Requires Zn(2+) as cofactor. Co(2+) is required as a cofactor.

The catalysed reaction is N-succinyl-(2S,6S)-2,6-diaminopimelate + H2O = (2S,6S)-2,6-diaminopimelate + succinate. The protein operates within amino-acid biosynthesis; L-lysine biosynthesis via DAP pathway; LL-2,6-diaminopimelate from (S)-tetrahydrodipicolinate (succinylase route): step 3/3. Catalyzes the hydrolysis of N-succinyl-L,L-diaminopimelic acid (SDAP), forming succinate and LL-2,6-diaminopimelate (DAP), an intermediate involved in the bacterial biosynthesis of lysine and meso-diaminopimelic acid, an essential component of bacterial cell walls. In Bordetella parapertussis (strain 12822 / ATCC BAA-587 / NCTC 13253), this protein is Succinyl-diaminopimelate desuccinylase.